A 379-amino-acid chain; its full sequence is Mannan endo-1,4-beta-mannosidase 7 (379 aa).

2 residues coordinate substrate: tryptophan 64 and asparagine 179. Glutamate 180 (proton donor) is an active-site residue. Substrate is bound at residue tyrosine 260. Glutamate 300 functions as the Nucleophile in the catalytic mechanism. Tryptophan 342 provides a ligand contact to substrate.

Belongs to the glycosyl hydrolase 5 (cellulase A) family. In terms of tissue distribution, expression not detected.

The catalysed reaction is Random hydrolysis of (1-&gt;4)-beta-D-mannosidic linkages in mannans, galactomannans and glucomannans.. The sequence is that of Mannan endo-1,4-beta-mannosidase 7 (MAN7) from Oryza sativa subsp. japonica (Rice).